The chain runs to 368 residues: G-protein coupled receptor 183-A (368 aa).

Residues Met-1–Gln-27 lie on the Extracellular side of the membrane. Asn-7 and Asn-11 each carry an N-linked (GlcNAc...) asparagine glycan. The chain crosses the membrane as a helical span at residues Tyr-28–Trp-53. The Cytoplasmic portion of the chain corresponds to Pro-54–Asp-73. Residues Ile-74–Phe-91 traverse the membrane as a helical segment. At Asp-92–Lys-101 the chain is on the extracellular side. A disulfide bridge connects residues Cys-100 and Cys-178. A helical membrane pass occupies residues Ala-102–Val-123. Topologically, residues Asp-124–Arg-145 are cytoplasmic. Residues Tyr-146–Ser-164 traverse the membrane as a helical segment. The Extracellular segment spans residues Met-165–Asn-189. The chain crosses the membrane as a helical span at residues Leu-190–Cys-212. The Cytoplasmic segment spans residues Tyr-213–Lys-238. The helical transmembrane segment at Ala-239–Leu-262 threads the bilayer. The Extracellular portion of the chain corresponds to Gln-263–Gln-282. Residues Ile-283–Cys-307 form a helical membrane-spanning segment. At Lys-308–Gln-368 the chain is on the cytoplasmic side.

It belongs to the G-protein coupled receptor 1 family.

The protein localises to the cell membrane. G-protein coupled receptor expressed in lymphocytes that acts as a chemotactic receptor for B-cells, T-cells, splenic dendritic cells, monocytes/macrophages and astrocytes. Receptor for oxysterol 7-alpha,25-dihydroxycholesterol (7-alpha,25-OHC) and other related oxysterols. Mediates cell positioning and movement of a number of cells by binding the 7-alpha,25-OHC ligand that forms a chemotactic gradient. Binding of 7-alpha,25-OHC mediates the correct localization of B-cells during humoral immune responses. The polypeptide is G-protein coupled receptor 183-A (gpr183a) (Danio rerio (Zebrafish)).